An 829-amino-acid polypeptide reads, in one-letter code: Periplasmic nitrate reductase (829 aa).

A signal peptide (tat-type signal) is located at residues 1–30 (MKLSRRDFMKANAVAAAAAVAGVSAPTLAA). The 4Fe-4S Mo/W bis-MGD-type domain maps to 41 to 97 (IKWDKAPCRFCGTGCSVLVGSQDGRVVATQGDPDAPVNRGLNCIKGYFLSKIMYGED). Residues cysteine 48, cysteine 51, cysteine 55, and cysteine 83 each coordinate [4Fe-4S] cluster. Mo-bis(molybdopterin guanine dinucleotide) contacts are provided by residues lysine 85, glutamine 152, asparagine 177, cysteine 181, 214–221 (WGSNMAEM), 245–249 (STFEH), 264–266 (QTD), methionine 374, glutamine 378, asparagine 484, 510–511 (SD), lysine 533, aspartate 560, and 719–728 (TGRVLEHWHT). Position 795 (phenylalanine 795) interacts with substrate. Asparagine 803 and lysine 820 together coordinate Mo-bis(molybdopterin guanine dinucleotide).

This sequence belongs to the prokaryotic molybdopterin-containing oxidoreductase family. NasA/NapA/NarB subfamily. In terms of assembly, component of the periplasmic nitrate reductase NapAB complex composed of NapA and NapB. [4Fe-4S] cluster serves as cofactor. The cofactor is Mo-bis(molybdopterin guanine dinucleotide). Predicted to be exported by the Tat system. The position of the signal peptide cleavage has not been experimentally proven.

The protein resides in the periplasm. It carries out the reaction 2 Fe(II)-[cytochrome] + nitrate + 2 H(+) = 2 Fe(III)-[cytochrome] + nitrite + H2O. Functionally, catalytic subunit of the periplasmic nitrate reductase complex NapAB. Receives electrons from NapB and catalyzes the reduction of nitrate to nitrite. The polypeptide is Periplasmic nitrate reductase (Aeromonas salmonicida (strain A449)).